Consider the following 854-residue polypeptide: ATP-dependent zinc metalloprotease FtsH (854 aa).

At 1-5 (MNRKT) the chain is on the cytoplasmic side. The chain crosses the membrane as a helical span at residues 6–26 (VFRNVLLVAVVLLVIYAFSYF). The Extracellular segment spans residues 27–112 (SNDTRDFKTV…FNTTVTQESW (86 aa)). A helical membrane pass occupies residues 113 to 133 (LTSILLFVLPMIILFGIFFFV). Topologically, residues 134–854 (MNRMQGGGGR…ARWDGPDGSR (721 aa)) are cytoplasmic. 207 to 214 (GPPGTGKT) is an ATP binding site. Residue His429 coordinates Zn(2+). Residue Glu430 is part of the active site. Residues His433 and Asp505 each contribute to the Zn(2+) site. The tract at residues 658 to 854 (AGAPNSGVPN…ARWDGPDGSR (197 aa)) is disordered. 2 stretches are compositionally biased toward low complexity: residues 661–692 (PNSGVPNGGVPNNGGLPNNGNQGPSNGYAQPS) and 698–719 (APQQTPQPGTPDYGAPAGWSAP). Residues 720-730 (GWPPRENPSPT) show a composition bias toward pro residues. The span at 749–778 (NQSQGQYGQPQHGQPQPDQGQYGQPHPGQQ) shows a compositional bias: low complexity. Over residues 812–822 (GNPSGENQWQS) the composition is skewed to polar residues. A compositionally biased stretch (pro residues) spans 825–834 (PEQPQTPPPH).

In the central section; belongs to the AAA ATPase family. This sequence in the C-terminal section; belongs to the peptidase M41 family. As to quaternary structure, homohexamer. It depends on Zn(2+) as a cofactor.

It is found in the cell membrane. Acts as a processive, ATP-dependent zinc metallopeptidase for both cytoplasmic and membrane proteins. Plays a role in the quality control of integral membrane proteins. The polypeptide is ATP-dependent zinc metalloprotease FtsH (Rhodococcus erythropolis (strain PR4 / NBRC 100887)).